Consider the following 133-residue polypeptide: Large-conductance mechanosensitive channel (133 aa).

Helical transmembrane passes span 10 to 30 and 76 to 96; these read FAVKGNVVDMAVGIVIGAAFG and GIFVQTLVDFIIIAFAIFLVV.

Belongs to the MscL family. Homopentamer.

The protein localises to the cell inner membrane. Channel that opens in response to stretch forces in the membrane lipid bilayer. May participate in the regulation of osmotic pressure changes within the cell. The protein is Large-conductance mechanosensitive channel of Chlorobium phaeobacteroides (strain BS1).